We begin with the raw amino-acid sequence, 930 residues long: Isoleucine--tRNA ligase (930 aa).

The 'HIGH' region motif lies at 57-67 (PYANGNIHVGH). Glu-554 serves as a coordination point for L-isoleucyl-5'-AMP. A 'KMSKS' region motif is present at residues 595 to 599 (KMSKS). Residue Lys-598 coordinates ATP. Zn(2+) contacts are provided by Cys-888, Cys-891, Cys-908, and Cys-911.

It belongs to the class-I aminoacyl-tRNA synthetase family. IleS type 1 subfamily. In terms of assembly, monomer. It depends on Zn(2+) as a cofactor.

The protein localises to the cytoplasm. The enzyme catalyses tRNA(Ile) + L-isoleucine + ATP = L-isoleucyl-tRNA(Ile) + AMP + diphosphate. Functionally, catalyzes the attachment of isoleucine to tRNA(Ile). As IleRS can inadvertently accommodate and process structurally similar amino acids such as valine, to avoid such errors it has two additional distinct tRNA(Ile)-dependent editing activities. One activity is designated as 'pretransfer' editing and involves the hydrolysis of activated Val-AMP. The other activity is designated 'posttransfer' editing and involves deacylation of mischarged Val-tRNA(Ile). The chain is Isoleucine--tRNA ligase from Streptococcus pneumoniae (strain ATCC 700669 / Spain 23F-1).